The primary structure comprises 268 residues: Large ribosomal subunit protein uL3 (268 aa).

Gln156 carries the N5-methylglutamine modification. Residues Val242 to Ala259 are compositionally biased toward low complexity. A disordered region spans residues Val242–Ala268.

The protein belongs to the universal ribosomal protein uL3 family. In terms of assembly, part of the 50S ribosomal subunit. Forms a cluster with proteins L14 and L19. Methylated by PrmB.

One of the primary rRNA binding proteins, it binds directly near the 3'-end of the 23S rRNA, where it nucleates assembly of the 50S subunit. The sequence is that of Large ribosomal subunit protein uL3 from Maricaulis maris (strain MCS10) (Caulobacter maris).